Consider the following 213-residue polypeptide: Uridine kinase (213 aa).

An ATP-binding site is contributed by 15-22 (GASASGKS).

It belongs to the uridine kinase family.

It is found in the cytoplasm. It catalyses the reaction uridine + ATP = UMP + ADP + H(+). The catalysed reaction is cytidine + ATP = CMP + ADP + H(+). The protein operates within pyrimidine metabolism; CTP biosynthesis via salvage pathway; CTP from cytidine: step 1/3. It functions in the pathway pyrimidine metabolism; UMP biosynthesis via salvage pathway; UMP from uridine: step 1/1. In Erwinia tasmaniensis (strain DSM 17950 / CFBP 7177 / CIP 109463 / NCPPB 4357 / Et1/99), this protein is Uridine kinase.